The sequence spans 483 residues: Protein EFFECTOR OF TRANSCRIPTION 2 (483 aa).

Residues 64–112 enclose the GIY-YIG domain; the sequence is SCPGLYELGVAVIGQEQCRKLEPDIVLASYLGQAESVRSRLQRYGRSGA. 2 Cx9Cx9RCx2HK repeats span residues 278–303 and 338–363; these read CGVL…IEHK and CGVI…EDHK. A compositionally biased stretch (basic and acidic residues) spans 380–396; the sequence is EKTVKDEKPDPESHTES. Positions 380–399 are disordered; the sequence is EKTVKDEKPDPESHTESIEE. Cx9Cx9RCx2HK repeat units follow at residues 406 to 431 and 453 to 478; these read CEAT…WQHK and CGVK…EEHK.

As to expression, expressed in vascular tissues of stems, hypocotyls, leaves and flowers. Expressed in the vascular bundles of xylem in shoot parenchyma cells. Expressed in the remnant cytoplasm of differentiated fiber cells and in protoxylem element of parenchymal cells.

It localises to the cytoplasm. It is found in the nucleus. In terms of biological role, transcriptional regulator involved in the regulation of cell differentiation in meristems. Probably regulates the expression of various KNAT genes involved in the maintenance of the cells in an undifferentiated, merismastic state. Plays a role in the regulation of gibberellin 20 oxidase and the gibberellin-regulated protein GASA4. Localizes in the nucleus during the cellular differentiation state and may act via a single strand cutting domain. Transcriptional regulator required for the induction of dormancy during late seed development. Interacts genetically with FUS3 and may be component of the same regulatory pathway during embryogenesis. Binds both linear and supercoiled DNA without sequence preference. This Arabidopsis thaliana (Mouse-ear cress) protein is Protein EFFECTOR OF TRANSCRIPTION 2.